Reading from the N-terminus, the 777-residue chain is Reticulon-1 (777 aa).

Disordered regions lie at residues methionine 1–serine 77, asparagine 129–aspartate 182, threonine 198–glycine 245, and alanine 293–proline 573. Phosphoserine occurs at positions 13 and 68. Basic and acidic residues predominate over residues arginine 199–glycine 233. Phosphoserine is present on residues serine 210, serine 241, and serine 325. Over residues proline 326 to serine 339 the composition is skewed to low complexity. 2 positions are modified to phosphoserine: serine 348 and serine 350. The span at isoleucine 393–serine 406 shows a compositional bias: polar residues. Serine 485 is modified (phosphoserine). A compositionally biased stretch (basic and acidic residues) spans alanine 495–proline 510. The segment covering threonine 525–glutamate 534 has biased composition (polar residues). Positions alanine 590–glutamate 777 constitute a Reticulon domain. Helical transmembrane passes span isoleucine 604–valine 624 and phenylalanine 706–leucine 726.

As to quaternary structure, interacts with NDRG1. Interacts with BACE1. Interacts with TMEM33. Interacts with UGCG; regulates the ceramide glucosyltransferase activity of UGCG. In terms of tissue distribution, expressed predominantly in central and peripheral nervous system of newborn and adult rats. Low levels have been also detected in heart, adrenal gland and spleen. Expression of isoform RTN1-B is restricted to particular neuronal types.

It is found in the endoplasmic reticulum membrane. The protein localises to the golgi apparatus membrane. Its function is as follows. Inhibits amyloid precursor protein processing, probably by blocking BACE1 activity. This chain is Reticulon-1 (Rtn1), found in Rattus norvegicus (Rat).